The following is a 628-amino-acid chain: UvrABC system protein C (628 aa).

The region spanning 21-100 (TGPGIYQFKN…IKELKPRYNV (80 aa)) is the GIY-YIG domain. Residues 214-249 (AGLLKELHEKMLTAAAELRFEEAAELKMQLQSLRRY) enclose the UVR domain.

The protein belongs to the UvrC family. As to quaternary structure, interacts with UvrB in an incision complex.

It localises to the cytoplasm. The UvrABC repair system catalyzes the recognition and processing of DNA lesions. UvrC both incises the 5' and 3' sides of the lesion. The N-terminal half is responsible for the 3' incision and the C-terminal half is responsible for the 5' incision. This chain is UvrABC system protein C, found in Chlorobium luteolum (strain DSM 273 / BCRC 81028 / 2530) (Pelodictyon luteolum).